The sequence spans 194 residues: Ras-related protein Rab-22A (194 aa).

12–20 provides a ligand contact to GTP; that stretch reads GDTGVGKSS. Residues 34 to 42 carry the Effector region motif; that stretch reads INPTIGASF. GTP-binding positions include 60 to 64, 118 to 121, and 148 to 150; these read DTAGQ, NKCD, and SAK. The disordered stretch occupies residues 170-194; it reads DANPPSGGKGFKLRRQPSEPQRSCC. S-geranylgeranyl cysteine attachment occurs at residues Cys193 and Cys194.

Belongs to the small GTPase superfamily. Rab family. As to quaternary structure, interacts directly with ZFYVE20. Interacts (in its GTP-bound form) with RINL and RABGEF1. Binds EEA1.

The protein resides in the endosome membrane. It is found in the cell membrane. It localises to the early endosome. The protein localises to the late endosome. Its subcellular location is the cell projection. The protein resides in the ruffle. It is found in the cytoplasmic vesicle. It localises to the phagosome. The protein localises to the phagosome membrane. Plays a role in endocytosis and intracellular protein transport. Mediates trafficking of TF from early endosomes to recycling endosomes. Required for NGF-mediated endocytosis of NTRK1, and subsequent neurite outgrowth. Binds GTP and GDP and has low GTPase activity. Alternates between a GTP-bound active form and a GDP-bound inactive form. This chain is Ras-related protein Rab-22A (RAB22A), found in Canis lupus familiaris (Dog).